Here is a 428-residue protein sequence, read N- to C-terminus: MKTNLWNGFIDVVKREVVPALGCTEPVSVALAAAIAVEKLNGTVEKITALVSPNLMKNGMGVGVPGTGMVGLPIAAAVGAIAGEANAQLEVLKNITPEDVAHAKILIDAGNVHVGVADVNNILYAKVTVTSGDEFVAVTIADSHTHVMAIEENGITTYIAEPANTATSVKKTSPFEGALLEDIYDFALNAPLEEICFIEHAAELNDALSEEGLTGKYGLQIGATFQRNVDRGLLSGGLLTDVLRRTAAASDARMDGAMKPAMSNSGSGNQGIAATMPVVVVADFLKVDKEKTIRALMLSHLTAIYIKSHQNKLSALCGATTASMGAVAGMTWLLGGDLNKINNAICSMIGDIAGIICDGAKTSCAMKVSSSAGSAVKSALMALDGIYVTGNEGIVADNADASIRNLSALANGSMTQTDVQILDIMVNK.

Belongs to the UPF0597 family.

The sequence is that of UPF0597 protein PBPRB0240 from Photobacterium profundum (strain SS9).